The following is a 249-amino-acid chain: Cell surface glycoprotein CD200 receptor 2 (249 aa).

An N-terminal signal peptide occupies residues 1-24 (MHALGRTPALTLLIFIYNFVSVYT). Residues 25–124 (IVSVQMGTKA…GNFHKVYDLQ (100 aa)) form the Ig-like V-type domain. The Extracellular segment spans residues 25–220 (IVSVQMGTKA…TTSTTPSLLT (196 aa)). Cys-38 and Cys-108 are joined by a disulfide. N-linked (GlcNAc...) asparagine glycans are attached at residues Asn-73, Asn-138, and Asn-171. Residues 113–208 (PEGNFHKVYD…GNQSLSIELS (96 aa)) enclose the Ig-like C2-type domain. Cys-143 and Cys-192 are joined by a disulfide. The helical transmembrane segment at 221 to 241 (ILYVKMVLLGIILLKVGFAFF) threads the bilayer. Topologically, residues 242–249 (QKRNVTRT) are cytoplasmic.

Belongs to the CD200R family. In terms of tissue distribution, expressed in bone marrow, spleen, brain, lung, testis and thymus.

The protein resides in the membrane. In terms of biological role, according to PubMed:15187158 it is a receptor for the CD200 cell surface glycoprotein. According to PubMed:16081818 it is not a receptor for the CD200/OX2 cell surface glycoprotein. Involved in the recruitment or surface expression of the TYROBP receptor. In Mus musculus (Mouse), this protein is Cell surface glycoprotein CD200 receptor 2 (Cd200r1l).